We begin with the raw amino-acid sequence, 50 residues long: Bacteriocin-like protein SboX (50 aa).

The chain is Bacteriocin-like protein SboX (sboX) from Bacillus subtilis (strain 168).